Reading from the N-terminus, the 343-residue chain is tRNA N6-adenosine threonylcarbamoyltransferase (343 aa).

The Fe cation site is built by His120 and His124. Substrate is bound by residues 142–146 (VVSGG), Asp175, Gly188, Asp192, and Asn281. Asp310 is a binding site for Fe cation.

This sequence belongs to the KAE1 / TsaD family. The cofactor is Fe(2+).

It localises to the cytoplasm. The enzyme catalyses L-threonylcarbamoyladenylate + adenosine(37) in tRNA = N(6)-L-threonylcarbamoyladenosine(37) in tRNA + AMP + H(+). Functionally, required for the formation of a threonylcarbamoyl group on adenosine at position 37 (t(6)A37) in tRNAs that read codons beginning with adenine. Is involved in the transfer of the threonylcarbamoyl moiety of threonylcarbamoyl-AMP (TC-AMP) to the N6 group of A37, together with TsaE and TsaB. TsaD likely plays a direct catalytic role in this reaction. The protein is tRNA N6-adenosine threonylcarbamoyltransferase of Bacillus thuringiensis (strain Al Hakam).